Consider the following 165-residue polypeptide: Neurotrophin-3 (165 aa).

A signal peptide spans 1–3 (IQS). A propeptide spanning residues 4-119 (TSMDQGSLSE…VLNQTSRRKR (116 aa)) is cleaved from the precursor. Asparagine 112 is a glycosylation site (N-linked (GlcNAc...) asparagine).

It belongs to the NGF-beta family.

The protein resides in the secreted. In terms of biological role, seems to promote the survival of visceral and proprioceptive sensory neurons. The sequence is that of Neurotrophin-3 (NTF3) from Aspidites melanocephalus (Black-headed python).